We begin with the raw amino-acid sequence, 180 residues long: Large ribosomal subunit protein uL5 (180 aa).

Belongs to the universal ribosomal protein uL5 family. As to quaternary structure, part of the 50S ribosomal subunit; part of the 5S rRNA/L5/L18/L25 subcomplex. Contacts the 5S rRNA and the P site tRNA. Forms a bridge to the 30S subunit in the 70S ribosome.

Functionally, this is one of the proteins that bind and probably mediate the attachment of the 5S RNA into the large ribosomal subunit, where it forms part of the central protuberance. In the 70S ribosome it contacts protein S13 of the 30S subunit (bridge B1b), connecting the 2 subunits; this bridge is implicated in subunit movement. Contacts the P site tRNA; the 5S rRNA and some of its associated proteins might help stabilize positioning of ribosome-bound tRNAs. The protein is Large ribosomal subunit protein uL5 of Chlamydia abortus (strain DSM 27085 / S26/3) (Chlamydophila abortus).